Reading from the N-terminus, the 542-residue chain is Hydroxylamine reductase (542 aa).

[4Fe-4S] cluster is bound by residues Cys5, Cys8, Cys17, and Cys23. Positions 237, 261, 305, 397, 425, 450, 485, and 487 each coordinate hybrid [4Fe-2O-2S] cluster. Residue Cys397 is modified to Cysteine persulfide.

The protein belongs to the HCP family. [4Fe-4S] cluster serves as cofactor. The cofactor is hybrid [4Fe-2O-2S] cluster.

The protein localises to the cytoplasm. It catalyses the reaction A + NH4(+) + H2O = hydroxylamine + AH2 + H(+). Catalyzes the reduction of hydroxylamine to form NH(3) and H(2)O. This Acetivibrio thermocellus (strain ATCC 27405 / DSM 1237 / JCM 9322 / NBRC 103400 / NCIMB 10682 / NRRL B-4536 / VPI 7372) (Clostridium thermocellum) protein is Hydroxylamine reductase.